Reading from the N-terminus, the 218-residue chain is Thiopurine S-methyltransferase (218 aa).

Positions 10, 45, 66, and 123 each coordinate S-adenosyl-L-methionine.

It belongs to the class I-like SAM-binding methyltransferase superfamily. TPMT family.

The protein resides in the cytoplasm. It catalyses the reaction S-adenosyl-L-methionine + a thiopurine = S-adenosyl-L-homocysteine + a thiopurine S-methylether.. This is Thiopurine S-methyltransferase from Shewanella baltica (strain OS195).